A 508-amino-acid chain; its full sequence is ATP synthase subunit alpha, chloroplastic (508 aa).

170 to 177 (GDRQTGKT) is a binding site for ATP.

The protein belongs to the ATPase alpha/beta chains family. In terms of assembly, F-type ATPases have 2 components, CF(1) - the catalytic core - and CF(0) - the membrane proton channel. CF(1) has five subunits: alpha(3), beta(3), gamma(1), delta(1), epsilon(1). CF(0) has four main subunits: a, b, b' and c.

The protein localises to the plastid. The protein resides in the chloroplast thylakoid membrane. The enzyme catalyses ATP + H2O + 4 H(+)(in) = ADP + phosphate + 5 H(+)(out). Functionally, produces ATP from ADP in the presence of a proton gradient across the membrane. The alpha chain is a regulatory subunit. The chain is ATP synthase subunit alpha, chloroplastic from Lactuca sativa (Garden lettuce).